The chain runs to 92 residues: Sugar fermentation stimulation protein B (92 aa).

Positions 50 to 69 form a DNA-binding region, H-T-H motif; the sequence is EMIIAKALGTDPWVIWPSRY.

It belongs to the ner transcriptional regulatory family.

Its function is as follows. This protein is involved in positive regulation of the metabolism of sugars. This chain is Sugar fermentation stimulation protein B (sfsB), found in Escherichia coli O157:H7.